A 511-amino-acid chain; its full sequence is Bifunctional purine biosynthesis protein PurH (511 aa).

The MGS-like domain occupies 1–145 (MKKRALVSVS…KNHKFVSVIV (145 aa)).

Belongs to the PurH family.

It carries out the reaction (6R)-10-formyltetrahydrofolate + 5-amino-1-(5-phospho-beta-D-ribosyl)imidazole-4-carboxamide = 5-formamido-1-(5-phospho-D-ribosyl)imidazole-4-carboxamide + (6S)-5,6,7,8-tetrahydrofolate. It catalyses the reaction IMP + H2O = 5-formamido-1-(5-phospho-D-ribosyl)imidazole-4-carboxamide. It functions in the pathway purine metabolism; IMP biosynthesis via de novo pathway; 5-formamido-1-(5-phospho-D-ribosyl)imidazole-4-carboxamide from 5-amino-1-(5-phospho-D-ribosyl)imidazole-4-carboxamide (10-formyl THF route): step 1/1. The protein operates within purine metabolism; IMP biosynthesis via de novo pathway; IMP from 5-formamido-1-(5-phospho-D-ribosyl)imidazole-4-carboxamide: step 1/1. The sequence is that of Bifunctional purine biosynthesis protein PurH from Bacillus thuringiensis (strain Al Hakam).